Reading from the N-terminus, the 144-residue chain is Large ribosomal subunit protein uL15 (144 aa).

Residues M1–R16 show a composition bias toward basic residues. The segment at M1–R35 is disordered.

Belongs to the universal ribosomal protein uL15 family. Part of the 50S ribosomal subunit.

Binds to the 23S rRNA. This chain is Large ribosomal subunit protein uL15, found in Sulfolobus acidocaldarius (strain ATCC 33909 / DSM 639 / JCM 8929 / NBRC 15157 / NCIMB 11770).